An 85-amino-acid chain; its full sequence is MLYFCLLLVLLLPNNGVSSEASCARMDVPVMQRIAQGLCTSSCTAQKCMTGICKKVDSHPTCFCGGCSNANDVSLDTLISQLPHN.

Residues 1–19 (MLYFCLLLVLLLPNNGVSS) form the signal peptide.

Expressed in the pharynx and body wall muscle.

The protein localises to the secreted. The sequence is that of Antibacterial factor-related peptide 1 from Caenorhabditis elegans.